Here is a 582-residue protein sequence, read N- to C-terminus: Cryptochrome-2 (582 aa).

Residues 12–141 (CRSVHWFRRG…EVVIENSHTL (130 aa)) enclose the Photolyase/cryptochrome alpha/beta domain. Residues S261, Q298, H364, and 396–398 (DAD) each bind FAD. Positions 521 to 559 (GPVTDSAPGQGSSTSTAVRLPQSDQASPKRKHEGAEELC) are disordered. A compositionally biased stretch (polar residues) spans 527-546 (APGQGSSTSTAVRLPQSDQA).

This sequence belongs to the DNA photolyase class-1 family. Component of the circadian core oscillator, which includes the CRY proteins, CLOCK or NPAS2, BMAL1 or BMAL2, CSNK1E, and the PER proteins. It depends on FAD as a cofactor. The cofactor is (6R)-5,10-methylene-5,6,7,8-tetrahydrofolate. As to expression, expressed in the pineal gland.

It is found in the cytoplasm. The protein localises to the nucleus. Functionally, transcriptional repressor which forms a core component of the circadian clock. The circadian clock, an internal time-keeping system, regulates various physiological processes through the generation of approximately 24 hour circadian rhythms in gene expression, which are translated into rhythms in metabolism and behavior. It is derived from the Latin roots 'circa' (about) and 'diem' (day) and acts as an important regulator of a wide array of physiological functions including metabolism, sleep, body temperature, blood pressure, endocrine, immune, cardiovascular, and renal function. Consists of two major components: the central clock, residing in the suprachiasmatic nucleus (SCN) of the brain, and the peripheral clocks that are present in nearly every tissue and organ system. Both the central and peripheral clocks can be reset by environmental cues, also known as Zeitgebers (German for 'timegivers'). The predominant Zeitgeber for the central clock is light, which is sensed by retina and signals directly to the SCN. The central clock entrains the peripheral clocks through neuronal and hormonal signals, body temperature and feeding-related cues, aligning all clocks with the external light/dark cycle. Circadian rhythms allow an organism to achieve temporal homeostasis with its environment at the molecular level by regulating gene expression to create a peak of protein expression once every 24 hours to control when a particular physiological process is most active with respect to the solar day. Transcription and translation of core clock components (CLOCK, NPAS2, BMAL1, BMAL2, PER1, PER2, PER3, CRY1 and CRY2) plays a critical role in rhythm generation, whereas delays imposed by post-translational modifications (PTMs) are important for determining the period (tau) of the rhythms (tau refers to the period of a rhythm and is the length, in time, of one complete cycle). A diurnal rhythm is synchronized with the day/night cycle, while the ultradian and infradian rhythms have a period shorter and longer than 24 hours, respectively. Disruptions in the circadian rhythms contribute to the pathology of cardiovascular diseases, cancer, metabolic syndromes and aging. A transcription/translation feedback loop (TTFL) forms the core of the molecular circadian clock mechanism. Transcription factors, CLOCK or NPAS2 and BMAL1 or BMAL2, form the positive limb of the feedback loop, act in the form of a heterodimer and activate the transcription of core clock genes and clock-controlled genes (involved in key metabolic processes), harboring E-box elements (5'-CACGTG-3') within their promoters. The core clock genes: PER1/2/3 and CRY1/2 which are transcriptional repressors form the negative limb of the feedback loop and interact with the CLOCK|NPAS2-BMAL1|BMAL2 heterodimer inhibiting its activity and thereby negatively regulating their own expression. This heterodimer also activates nuclear receptors NR1D1/2, RORA/B/G, which form a second feedback loop and which activate and repress BMAL1 transcription, respectively. CRY1 and CRY2 have redundant functions but also differential and selective contributions at least in defining the pace of the SCN circadian clock and its circadian transcriptional outputs. Less potent transcriptional repressor in cerebellum and liver than CRY1, though less effective in lengthening the period of the SCN oscillator. Seems to play a critical role in tuning SCN circadian period by opposing the action of CRY1. With CRY1, dispensable for circadian rhythm generation but necessary for the development of intercellular networks for rhythm synchrony. Represses CLOCK-BMAL1-mediated transcriptional activation. In Gallus gallus (Chicken), this protein is Cryptochrome-2 (CRY2).